The following is a 292-amino-acid chain: Homoserine kinase (292 aa).

80-90 (PLARGLGSSSS) lines the ATP pocket.

It belongs to the GHMP kinase family. Homoserine kinase subfamily.

It localises to the cytoplasm. It catalyses the reaction L-homoserine + ATP = O-phospho-L-homoserine + ADP + H(+). Its pathway is amino-acid biosynthesis; L-threonine biosynthesis; L-threonine from L-aspartate: step 4/5. Its function is as follows. Catalyzes the ATP-dependent phosphorylation of L-homoserine to L-homoserine phosphate. The sequence is that of Homoserine kinase from Leuconostoc mesenteroides subsp. mesenteroides (strain ATCC 8293 / DSM 20343 / BCRC 11652 / CCM 1803 / JCM 6124 / NCDO 523 / NBRC 100496 / NCIMB 8023 / NCTC 12954 / NRRL B-1118 / 37Y).